Here is a 463-residue protein sequence, read N- to C-terminus: Probable Xaa-Pro aminopeptidase pepP (463 aa).

Residues Asp259, Asp270, Glu393, and Glu433 each coordinate Mn(2+).

The protein belongs to the peptidase M24B family. Mn(2+) serves as cofactor.

The catalysed reaction is Release of any N-terminal amino acid, including proline, that is linked to proline, even from a dipeptide or tripeptide.. Its function is as follows. Catalyzes the removal of a penultimate prolyl residue from the N-termini of peptides. This chain is Probable Xaa-Pro aminopeptidase pepP (pepP), found in Pyrenophora teres f. teres (strain 0-1) (Barley net blotch fungus).